The sequence spans 138 residues: Flagellar assembly factor FliW (138 aa).

This sequence belongs to the FliW family. Interacts with translational regulator CsrA and flagellin(s).

The protein resides in the cytoplasm. In terms of biological role, acts as an anti-CsrA protein, binds CsrA and prevents it from repressing translation of its target genes, one of which is flagellin. Binds to flagellin and participates in the assembly of the flagellum. This is Flagellar assembly factor FliW from Symbiobacterium thermophilum (strain DSM 24528 / JCM 14929 / IAM 14863 / T).